The primary structure comprises 71 residues: uncharacterized protein (71 aa).

Residues 5 to 59 (IKEFRAKFNMTQEELAKRVGVRRETIVFLEKGKYNPSLKLAYKIARVFNAKIEDI) form the HTH cro/C1-type domain. The segment at residues 16–35 (QEELAKRVGVRRETIVFLEK) is a DNA-binding region (H-T-H motif).

This is an uncharacterized protein from Archaeoglobus fulgidus (strain ATCC 49558 / DSM 4304 / JCM 9628 / NBRC 100126 / VC-16).